The primary structure comprises 88 residues: RNA-binding protein Hfq (88 aa).

A Sm domain is found at D9–V68. The segment at R66–E88 is disordered. The span at T72–E88 shows a compositional bias: basic and acidic residues.

This sequence belongs to the Hfq family. In terms of assembly, homohexamer.

Its function is as follows. RNA chaperone that binds small regulatory RNA (sRNAs) and mRNAs to facilitate mRNA translational regulation in response to envelope stress, environmental stress and changes in metabolite concentrations. Also binds with high specificity to tRNAs. The protein is RNA-binding protein Hfq of Aliivibrio salmonicida (strain LFI1238) (Vibrio salmonicida (strain LFI1238)).